Reading from the N-terminus, the 795-residue chain is Phospholipase A-2-activating protein (795 aa).

WD repeat units follow at residues 17–56, 63–107, 110–148, 149–188, 190–227, 229–268, and 270–307; these read HELD…RGFT, GHSN…PLYI, GHKD…MTLQ, GHTA…RTFS, HEDC…LGVY, GHTN…QTIR, and PAQS…TASA. Phosphoserine is present on Ser50. A PFU domain is found at 366–465; that stretch reads QWSVSDGRWI…KGQTLGLGNT (100 aa). Lys529 bears the N6-acetyllysine mark. Positions 533–794 constitute a PUL domain; it reads IYFPKKEALT…SECCRLILNL (262 aa). 6 ARM repeats span residues 546 to 588, 589 to 620, 621 to 669, 670 to 715, 716 to 755, and 756 to 795; these read ANPT…GNAS, EKPT…LRLS, IKHP…CFVS, QAGQ…CFHK, DHNI…LISD, and DSNA…LNLL.

It belongs to the WD repeat PLAP family. In terms of assembly, interacts with ubiquitin. Interacts with UBXN6, VCP and YOD1; may form a complex involved in macroautophagy.

It localises to the nucleus. It is found in the cytoplasm. The protein localises to the synapse. Functionally, plays a role in protein ubiquitination, sorting and degradation through its association with VCP. Involved in ubiquitin-mediated membrane proteins trafficking to late endosomes in an ESCRT-dependent manner, and hence plays a role in synaptic vesicle recycling. May play a role in macroautophagy, regulating for instance the clearance of damaged lysosomes. Plays a role in cerebellar Purkinje cell development. Positively regulates cytosolic and calcium-independent phospholipase A2 activities in a tumor necrosis factor alpha (TNF-alpha)- or lipopolysaccharide (LPS)-dependent manner, and hence prostaglandin E2 biosynthesis. The protein is Phospholipase A-2-activating protein (Plaa) of Rattus norvegicus (Rat).